The following is a 690-amino-acid chain: Long-chain fatty acid transport protein 5 (690 aa).

Topologically, residues 1 to 30 (MGVRQQLALLLLLLLLLWGLGQPVWPVAVA) are cytoplasmic. Helical transmembrane passes span 31 to 51 (LTLR…LAML) and 56 to 76 (LGPW…LTLL). Topologically, residues 77–690 (PARLPPGLRW…QAVCEGTWRL (614 aa)) are cytoplasmic. 292–303 (FIYTSGTTGLPK) is an AMP binding site. S501 is subject to Phosphoserine.

It belongs to the ATP-dependent AMP-binding enzyme family. In terms of tissue distribution, predominantly expressed in liver.

The protein localises to the endoplasmic reticulum membrane. It is found in the microsome. The protein resides in the cell membrane. The enzyme catalyses a fatty acid(in) = a fatty acid(out). The catalysed reaction is cholate + ATP + CoA = choloyl-CoA + AMP + diphosphate. It carries out the reaction chenodeoxycholate + ATP + CoA = chenodeoxycholoyl-CoA + AMP + diphosphate. It catalyses the reaction deoxycholate + ATP + CoA = deoxycholoyl-CoA + AMP + diphosphate. The enzyme catalyses lithocholate + ATP + CoA = lithocholoyl-CoA + AMP + diphosphate. The catalysed reaction is (25R)-3alpha,7alpha,12alpha-trihydroxy-5beta-cholestan-26-oate + ATP + CoA = (25R)-3alpha,7alpha,12alpha-trihydroxy-5beta-cholestan-26-oyl-CoA + AMP + diphosphate. It carries out the reaction a very long-chain fatty acid + ATP + CoA = a very long-chain fatty acyl-CoA + AMP + diphosphate. It catalyses the reaction tetracosanoate + ATP + CoA = tetracosanoyl-CoA + AMP + diphosphate. The enzyme catalyses hexacosanoate + ATP + CoA = hexacosanoyl-CoA + AMP + diphosphate. The catalysed reaction is a long-chain fatty acid + ATP + CoA = a long-chain fatty acyl-CoA + AMP + diphosphate. It carries out the reaction octadecanoate + ATP + CoA = octadecanoyl-CoA + AMP + diphosphate. It catalyses the reaction eicosanoate + ATP + CoA = eicosanoyl-CoA + AMP + diphosphate. With respect to regulation, 3-alpha,7-alpha,12-alpha-trihydroxy-5-beta-cholestanate (THCA) inhibits the activation of cholate. Functionally, may mediate the import of long-chain fatty acids (LCFA) by facilitating their transport across cell membranes. Also catalyzes the ATP-dependent formation of fatty acyl-CoA using LCFA and very-long-chain fatty acids (VLCFA) as substrates. Mainly functions as a bile acyl-CoA synthetase catalyzing the activation of bile acids via ATP-dependent formation of bile acid CoA thioesters which is necessary for their subsequent conjugation with glycine or taurine. Both primary bile acids (cholic acid and chenodeoxycholic acid) and secondary bile acids (deoxycholic acid and lithocholic acid) are the principal substrates. In vitro, activates 3-alpha,7-alpha,12-alpha-trihydroxy-5-beta-cholestanate ((25R)-3alpha,7alpha,12alpha-trihydroxy-5beta-cholestan-26-oate or THCA), the C27 precursor of cholic acid deriving from the de novo synthesis from cholesterol. Plays an important role in hepatic fatty acid uptake and bile acid reconjugation and recycling but not in de novo synthesis of bile acids. This is Long-chain fatty acid transport protein 5 (SLC27A5) from Homo sapiens (Human).